Here is a 395-residue protein sequence, read N- to C-terminus: MAVYCSENFSVYPQPSLHPPGAAAAAAAAAAAAAAAAASSGQRAGGYALGDYGAPANAGYLWGMNSPAPYLQGPPGSGAAASPFLPPASYGCSRGGQLVGSPSGPGSPSAGGAELSWLSLASQEELLKLVRPPYSYSALIAMAIQSAPERKLTLSHIYQYVAENFPFYKRSKAGWQNSIRHNLSLNDCFRKVPRDEDDPGKGNYWTLDPNCEKMFDNGNFRRKRKRRSEPNTPATTAAASSLGGLKAEEERPIPASGKPCGNSPPPELDPSPSARDHPKSSSPSGIISSTPSCLSTFFSGMSSLSGGGSRLTGGLSTDLHHRNFSAGQLSGGTFTPSSSSSQEVPSPEQLQRVAGPSPAYYSSFHPSSGSQGAQYNHYYNFTVNSLIYTRDGTEV.

Positions 131 to 225 (RPPYSYSALI…DNGNFRRKRK (95 aa)) form a DNA-binding region, fork-head. Disordered stretches follow at residues 216–288 (DNGN…GIIS) and 322–370 (RNFS…SSGS). A Nuclear localization signal motif is present at residues 221–227 (RRKRKRR). The span at 234–245 (ATTAAASSLGGL) shows a compositional bias: low complexity. Polar residues predominate over residues 325-335 (SAGQLSGGTFT). Low complexity predominate over residues 336–349 (PSSSSSQEVPSPEQ).

Initially expressed in the pre-placodal ectoderm surrounding the neural plate, which will give rise to all craniofacial sensory organs. Expression then becomes restricted to a region immediately anterior to the first pair of somites that will give rise to the otic and epibranchial placodes, before becoming down-regulated from this region and restricted to the ectoderm and endoderm of the pharyngeal arches.

Its subcellular location is the nucleus. Functionally, transcription factor required for pharyngeal arch development, which is involved in otic placode development. The sequence is that of Forkhead box protein I3 from Gallus gallus (Chicken).